Here is a 93-residue protein sequence, read N- to C-terminus: Acylphosphatase (93 aa).

Cys-5 and Cys-49 are oxidised to a cystine. Residues 5–93 (CIIAWVYGRV…ETLTGFSIRY (89 aa)) enclose the Acylphosphatase-like domain. Asn-38 is a catalytic residue.

Belongs to the acylphosphatase family.

It carries out the reaction an acyl phosphate + H2O = a carboxylate + phosphate + H(+). The polypeptide is Acylphosphatase (Salmonella paratyphi A (strain ATCC 9150 / SARB42)).